A 94-amino-acid polypeptide reads, in one-letter code: Small ribosomal subunit protein uS19 (94 aa).

The protein belongs to the universal ribosomal protein uS19 family.

In terms of biological role, protein S19 forms a complex with S13 that binds strongly to the 16S ribosomal RNA. The chain is Small ribosomal subunit protein uS19 from Natranaerobius thermophilus (strain ATCC BAA-1301 / DSM 18059 / JW/NM-WN-LF).